The following is a 513-amino-acid chain: Probable G-protein coupled receptor Mth-like 9 (513 aa).

The first 19 residues, 1 to 19, serve as a signal peptide directing secretion; that stretch reads MVSPLIILLIIWLSVGAKS. Residues 20-207 are Extracellular-facing; that stretch reads VEIASINHPC…NCERFQTGYR (188 aa). Cystine bridges form between Cys29-Cys82, Cys84-Cys89, Cys93-Cys181, and Cys94-Cys107. Asn36 is a glycosylation site (N-linked (GlcNAc...) asparagine). 3 N-linked (GlcNAc...) asparagine glycosylation sites follow: Asn106, Asn125, and Asn165. Residues 208–228 traverse the membrane as a helical segment; it reads VWIYAICSIIAIIINIFILSL. Topologically, residues 229–242 are cytoplasmic; the sequence is LGSVRDARKSHYGQ. A helical transmembrane segment spans residues 243 to 263; the sequence is LIIYYLLSMIVGYSLLVYLAL. The Extracellular segment spans residues 264–276; the sequence is KNPMKLSHVACRN. The chain crosses the membrane as a helical span at residues 277 to 297; the sequence is IGFLAYFCIMLSFVFLAICSL. The Cytoplasmic segment spans residues 298 to 314; it reads DFLLKFKQKAVRSSVRR. Residues 315-335 form a helical membrane-spanning segment; the sequence is LSLALAVLAVIGLRFLVSLAQ. Topologically, residues 336–360 are extracellular; the sequence is DSKLPKHFKPGMGEDYCWFDVRTWG. A helical membrane pass occupies residues 361–381; that stretch reads ILIYYYGPIALLLIFSIVCCL. The Cytoplasmic segment spans residues 382–403; it reads KAYFSIYELPPDTQYILGTQLK. The helical transmembrane segment at 404 to 424 threads the bilayer; sequence IVKTHFYAFSAYIVGVFAVWI. Topologically, residues 425-438 are extracellular; it reads REIVVYIMARVREH. The helical transmembrane segment at 439–459 threads the bilayer; that stretch reads FFIIDFWSGICILGLAIAGFI. At 460–513 the chain is on the cytoplasmic side; it reads LLLGKNLHVKSWWAINVESSQTDLSIINARVYKFDEKGDLKSSDSPYKPTVTSL.

This sequence belongs to the G-protein coupled receptor 2 family. Mth subfamily.

It is found in the cell membrane. The polypeptide is Probable G-protein coupled receptor Mth-like 9 (mthl9) (Drosophila melanogaster (Fruit fly)).